Reading from the N-terminus, the 153-residue chain is MGSFSTITASFLLFLACQLLWQTGANPVYGSVSNADLMDFKNLLDHLEDKMPLEDEVVPPQVLSEQNEEAGAALSPLPEVPPWAGEVNPAQRDGGALGRGSWDSSDRSALLKSKLRALLAAPRSLRRSSCFGGRMDRIGAQSGLGCNSFRYRR.

Positions 1-25 (MGSFSTITASFLLFLACQLLWQTGA) are cleaved as a signal peptide. 2 propeptides span residues 26–123 (NPVY…AAPR) and 93–103 (DGGALGRGSWD). Positions 62–104 (VLSEQNEEAGAALSPLPEVPPWAGEVNPAQRDGGALGRGSWDS) are disordered. Residue S129 is modified to Phosphoserine. C130 and C146 form a disulfide bridge. Residues 147–151 (NSFRY) form an important for degradation of atrial natriuretic peptide by IDE region.

This sequence belongs to the natriuretic peptide family. Homodimer; disulfide-linked antiparallel dimer. The precursor molecule is proteolytically cleaved by CORIN at Arg-123 to produce the atrial natriuretic peptide. Undergoes further proteolytic cleavage by unknown proteases to give rise to long-acting natriuretic peptide, vessel dilator and kaliuretic peptide. Additional processing gives rise to the auriculin and atriopeptin peptides. In the kidneys, alternative processing by an unknown protease results in the peptide urodilatin. In terms of processing, cleavage by MME initiates degradation of the factor and thereby regulates its activity. Degradation by IDE results in reduced activation of NPR1 (in vitro). During IDE degradation, the resulting products can temporarily stimulate NPR2 to produce cGMP, before the fragments are completely degraded and inactivated by IDE (in vitro). Post-translationally, degraded by IDE. Phosphorylation on Ser-129 decreases vasorelaxant activity.

Its subcellular location is the secreted. It is found in the perikaryon. It localises to the cell projection. In terms of biological role, hormone that plays a key role in mediating cardio-renal homeostasis, and is involved in vascular remodeling and regulating energy metabolism. Acts by specifically binding and stimulating NPR1 to produce cGMP, which in turn activates effector proteins, such as PRKG1, that drive various biological responses. Regulates vasodilation, natriuresis, diuresis and aldosterone synthesis and is therefore essential for regulating blood pressure, controlling the extracellular fluid volume and maintaining the fluid-electrolyte balance. Also involved in inhibiting cardiac remodeling and cardiac hypertrophy by inducing cardiomyocyte apoptosis and attenuating the growth of cardiomyocytes and fibroblasts. Plays a role in female pregnancy by promoting trophoblast invasion and spiral artery remodeling in uterus, and thus prevents pregnancy-induced hypertension. In adipose tissue, acts in various cGMP- and PKG-dependent pathways to regulate lipid metabolism and energy homeostasis. This includes up-regulating lipid metabolism and mitochondrial oxygen utilization by activating the AMP-activated protein kinase (AMPK), and increasing energy expenditure by acting via MAPK11 to promote the UCP1-dependent thermogenesis of brown adipose tissue. Binds the clearance receptor NPR3 which removes the hormone from circulation. May have a role in cardio-renal homeostasis through regulation of natriuresis, diuresis, vasodilation, and inhibiting aldosterone synthesis. In vitro, promotes the production of cGMP and induces vasodilation. May promote natriuresis, at least in part, by enhancing prostaglandin E2 synthesis resulting in the inhibition of renal Na+-K+-ATPase. However reports on the involvement of this peptide in mammal blood volume and blood pressure homeostasis are conflicting; according to a report, in vivo it is not sufficient to activate cGMP and does not inhibit collecting duct transport nor effect diuresis and natriuresis. Appears to bind to specific receptors that are distinct from the receptors bound by atrial natriuretic peptide and vessel dilator. Possibly enhances protein excretion in urine by decreasing proximal tubular protein reabsorption. Its function is as follows. May have a role in cardio-renal homeostasis through regulation of natriuresis, diuresis, and vasodilation. In vitro, promotes the production of cGMP and induces vasodilation. May promote natriuresis, at least in part, by enhancing prostaglandin E2 synthesis resulting in the inhibition of renal Na+-K+-ATPase. However reports on the involvement of this peptide in mammal blood volume and blood pressure homeostasis are conflicting; according to a report it is not sufficient to activate cGMP and does not inhibit collecting duct transport nor effect diuresis and natriuresis. Appears to bind to specific receptors that are distinct from the receptors bound by the atrial natriuretic and long-acting natriuretic peptides. Possibly functions in protein excretion in urine by maintaining the integrity of the proximal tubules and enhancing protein excretion by decreasing proximal tubular protein reabsorption. Functionally, may have a role in cardio-renal homeostasis through regulation of diuresis and inhibiting aldosterone synthesis. In vitro, promotes the production of cGMP and induces vasodilation. May promote natriuresis, at least in part, by enhancing prostaglandin E2 synthesis resulting in the inhibition of renal Na+-K+-ATPase. May have a role in potassium excretion but not sodium excretion (natriuresis). Possibly enhances protein excretion in urine by decreasing proximal tubular protein reabsorption. In terms of biological role, hormone produced in the kidneys that appears to be important for maintaining cardio-renal homeostasis. Mediates vasodilation, natriuresis and diuresis primarily in the renal system, in order to maintain the extracellular fluid volume and control the fluid-electrolyte balance. Specifically binds and stimulates cGMP production by renal transmembrane receptors, likely NPR1. Urodilatin not ANP, may be the natriuretic peptide responsible for the regulation of sodium and water homeostasis in the kidney. May have a role in cardio-renal homeostasis through regulation of natriuresis and vasodilation. In vivo promotes natriuresis and in vitro, vasodilates renal artery strips. Its function is as follows. May have a role in cardio-renal homeostasis through regulation of regulation of natriuresis and vasodilation. In vivo promotes natriuresis. In vitro, vasodilates intestinal smooth muscle but not smooth muscle strips. Functionally, may have a role in cardio-renal homeostasis through regulation of natriuresis and vasodilation. In vivo promotes natriuresis. In vitro, selectively vasodilates intestinal and vascular smooth muscle strips. In terms of biological role, may have a role in cardio-renal homeostasis through regulation of natriuresis and vasodilation. In vivo promotes natriuresis. In vitro, selectively vasodilates intestinal smooth muscle but not vascular smooth muscle strips. This is Natriuretic peptides A (NPPA) from Felis catus (Cat).